Reading from the N-terminus, the 129-residue chain is Follitropin subunit beta (129 aa).

An N-terminal signal peptide occupies residues 1–18; the sequence is MKSVQFCFLFCCWKAICC. Intrachain disulfides connect Cys-21–Cys-69, Cys-35–Cys-84, Cys-38–Cys-122, Cys-46–Cys-100, Cys-50–Cys-102, and Cys-105–Cys-112. 2 N-linked (GlcNAc...) asparagine glycosylation sites follow: Asn-25 and Asn-42.

Belongs to the glycoprotein hormones subunit beta family. In terms of assembly, heterodimer. The active follitropin is a heterodimer composed of an alpha chain/CGA shared with other hormones and a unique beta chain/FSHB shown here.

The protein localises to the secreted. Together with the alpha chain CGA constitutes follitropin, the follicle-stimulating hormone, and provides its biological specificity to the hormone heterodimer. Binds FSHR, a G protein-coupled receptor, on target cells to activate downstream signaling pathways. Follitropin is involved in follicle development and spermatogenesis in reproductive organs. This is Follitropin subunit beta (FSHB) from Oryctolagus cuniculus (Rabbit).